A 202-amino-acid chain; its full sequence is ATP-dependent Clp protease proteolytic subunit (202 aa).

Serine 106 acts as the Nucleophile in catalysis. Histidine 131 is a catalytic residue.

The protein belongs to the peptidase S14 family. In terms of assembly, fourteen ClpP subunits assemble into 2 heptameric rings which stack back to back to give a disk-like structure with a central cavity, resembling the structure of eukaryotic proteasomes.

The protein resides in the cytoplasm. It catalyses the reaction Hydrolysis of proteins to small peptides in the presence of ATP and magnesium. alpha-casein is the usual test substrate. In the absence of ATP, only oligopeptides shorter than five residues are hydrolyzed (such as succinyl-Leu-Tyr-|-NHMec, and Leu-Tyr-Leu-|-Tyr-Trp, in which cleavage of the -Tyr-|-Leu- and -Tyr-|-Trp bonds also occurs).. Functionally, cleaves peptides in various proteins in a process that requires ATP hydrolysis. Has a chymotrypsin-like activity. Plays a major role in the degradation of misfolded proteins. This is ATP-dependent Clp protease proteolytic subunit from Acidovorax sp. (strain JS42).